Reading from the N-terminus, the 123-residue chain is Small ribosomal subunit protein uS12cz/uS12cy (123 aa).

This sequence belongs to the universal ribosomal protein uS12 family. As to quaternary structure, part of the 30S ribosomal subunit.

The protein resides in the plastid. The protein localises to the chloroplast. Functionally, with S4 and S5 plays an important role in translational accuracy. Located at the interface of the 30S and 50S subunits. The protein is Small ribosomal subunit protein uS12cz/uS12cy (rps12-A) of Citrus sinensis (Sweet orange).